The chain runs to 320 residues: o-succinylbenzoate synthase (320 aa).

The active-site Proton donor is Lys-133. 3 residues coordinate Mg(2+): Asp-161, Glu-190, and Asp-213. The Proton acceptor role is filled by Lys-235.

Belongs to the mandelate racemase/muconate lactonizing enzyme family. MenC type 1 subfamily. It depends on a divalent metal cation as a cofactor.

It catalyses the reaction (1R,6R)-6-hydroxy-2-succinyl-cyclohexa-2,4-diene-1-carboxylate = 2-succinylbenzoate + H2O. The protein operates within quinol/quinone metabolism; 1,4-dihydroxy-2-naphthoate biosynthesis; 1,4-dihydroxy-2-naphthoate from chorismate: step 4/7. It functions in the pathway quinol/quinone metabolism; menaquinone biosynthesis. Its function is as follows. Converts 2-succinyl-6-hydroxy-2,4-cyclohexadiene-1-carboxylate (SHCHC) to 2-succinylbenzoate (OSB). In Shigella boydii serotype 4 (strain Sb227), this protein is o-succinylbenzoate synthase.